We begin with the raw amino-acid sequence, 229 residues long: Large ribosomal subunit protein bL19cy (229 aa).

Residues 1–70 constitute a chloroplast transit peptide; the sequence is MATSSHLLPQ…DSKKRKEFIA (70 aa).

Belongs to the bacterial ribosomal protein bL19 family. In terms of assembly, part of the 50S ribosomal subunit.

The protein localises to the plastid. Its subcellular location is the chloroplast. In terms of biological role, located at the 30S-50S ribosomal subunit interface and binds directly to 23S ribosomal RNA. The polypeptide is Large ribosomal subunit protein bL19cy (Arabidopsis thaliana (Mouse-ear cress)).